The following is a 291-amino-acid chain: Meiosis-specific protein SPO13 (291 aa).

3 disordered regions span residues 1 to 30, 116 to 143, and 271 to 291; these read MAPR…QEKT, SFDN…QSSQ, and CSDY…SSLN. The Nuclear localization signal signature appears at 3–6; the sequence is PRKR. Over residues 116-125 the composition is skewed to basic and acidic residues; the sequence is SFDNSLRFED. Residues 130–143 show a composition bias toward polar residues; that stretch reads PKSTSTPVLSQSSQ.

Its subcellular location is the nucleus. Functionally, required for meiosis I segmentation. Probably acts as a regulator of kinetochore function during meiosis I: required both for mono-orientation of kinetochores on sister chromosomes and protection of centromeric cohesin from separase-mediated cleavage. In Saccharomyces cerevisiae (strain ATCC 204508 / S288c) (Baker's yeast), this protein is Meiosis-specific protein SPO13 (SPO13).